The chain runs to 631 residues: RING finger protein 112 (631 aa).

The RING-type zinc-finger motif lies at Cys-57–Arg-98. Residues Pro-131–Glu-631 form an interaction with ZBTB16 region. One can recognise a GB1/RHD3-type G domain in the interval Asp-166–Pro-397. A GTP-binding site is contributed by Arg-318–Asp-319. A run of 2 helical transmembrane segments spans residues Leu-547–Gly-567 and Gly-580–Val-600.

The protein belongs to the TRAFAC class dynamin-like GTPase superfamily. GB1/RHD3 GTPase family. GB1 subfamily. Self-associates. Interacts with SP1 in an oxidative stress-regulated manner. Interacts with SIGMAR1 in an oxidative stress-regulated manner. Interacts with ZBTB16 (via C2H2-type zinc finger domains 1 and 2). Auto-ubiquitinated. As to expression, predominantly expressed in brain. Decreased expression in glioma brain tumors as compared to normal brains (at protein level).

The protein resides in the membrane. Its subcellular location is the cytoplasm. It localises to the nucleus. It is found in the nuclear body. The protein localises to the nucleoplasm. The protein resides in the endosome. Its subcellular location is the cytoplasmic vesicle. It localises to the secretory vesicle. It is found in the synaptic vesicle. The protein localises to the postsynaptic density. The protein resides in the perikaryon. Its subcellular location is the cell projection. It localises to the neuron projection. It carries out the reaction S-ubiquitinyl-[E2 ubiquitin-conjugating enzyme]-L-cysteine + [acceptor protein]-L-lysine = [E2 ubiquitin-conjugating enzyme]-L-cysteine + N(6)-ubiquitinyl-[acceptor protein]-L-lysine.. It participates in protein modification; protein ubiquitination. Functionally, E3 ubiquitin-protein ligase that plays an important role in neuronal differentiation, including neurogenesis and gliogenesis, during brain development. During embryonic development initiates neuronal differentiation by inducing cell cycle arrest at the G0/G1 phase through up-regulation of cell-cycle regulatory proteins. Plays a role not only in the fetal period during the development of the nervous system, but also in the adult brain, where it is involved in the maintenance of neural functions and protection of the nervous tissue cells from oxidative stress-induced damage. Exhibits GTPase and E3 ubiquitin-protein ligase activities. Regulates dendritic spine density and synaptic neurotransmission; its ability to hydrolyze GTP is involved in the maintenance of dendritic spine density. The protein is RING finger protein 112 (RNF112) of Homo sapiens (Human).